Reading from the N-terminus, the 157-residue chain is MAIASQSLSVNQMYEKLLQNGEVESNSPKNRLRLYHLLQSKKIPFETKIIGYTSGEKSLSRWSGRRMGWDLGRVVKWIESGRLTREELQRCCDLFNQSNCKPRAELSDIENVFNKELNREQKCQLIKNNWDKILDDKWTPFDYCMLKKTIVRITLVK.

This sequence belongs to the mimivirus L242/L243 family.

This is an uncharacterized protein from Acanthamoeba polyphaga (Amoeba).